A 197-amino-acid polypeptide reads, in one-letter code: Protein GrpE (197 aa).

Positions 1 to 27 (MTKQEKAENQEKPTEETVEETPKKETP) are enriched in basic and acidic residues. The tract at residues 1–50 (MTKQEKAENQEKPTEETVEETPKKETPFEPVMEADEVEETTEAQAPVEEA) is disordered. Residues 32-41 (MEADEVEETT) show a composition bias toward acidic residues.

It belongs to the GrpE family. As to quaternary structure, homodimer.

The protein localises to the cytoplasm. Functionally, participates actively in the response to hyperosmotic and heat shock by preventing the aggregation of stress-denatured proteins, in association with DnaK and GrpE. It is the nucleotide exchange factor for DnaK and may function as a thermosensor. Unfolded proteins bind initially to DnaJ; upon interaction with the DnaJ-bound protein, DnaK hydrolyzes its bound ATP, resulting in the formation of a stable complex. GrpE releases ADP from DnaK; ATP binding to DnaK triggers the release of the substrate protein, thus completing the reaction cycle. Several rounds of ATP-dependent interactions between DnaJ, DnaK and GrpE are required for fully efficient folding. The polypeptide is Protein GrpE (Latilactobacillus sakei (Lactobacillus sakei)).